We begin with the raw amino-acid sequence, 172 residues long: 5'(3')-deoxyribonucleotidase (172 aa).

D8 (nucleophile) is an active-site residue. Mg(2+)-binding residues include D8, D10, and D132. D10 functions as the Proton donor in the catalytic mechanism.

The protein belongs to the 5'(3')-deoxyribonucleotidase family. Requires Mg(2+) as cofactor.

Its function is as follows. Dephosphorylates nucleoside monophosphates such as the 5' and 2'(3')-phosphates of deoxyribonucleotides in vitro. Also catalyzes the dephosphorylation of coenzyme A (CoA), pyridoxal-5'-phosphate (PLP), riboflavine-5-phosphate (FMN) and nicotinamide adenine dinucleotide phosphate (NADP) in vitro. The polypeptide is 5'(3')-deoxyribonucleotidase (yorS) (Bacillus subtilis (strain 168)).